A 183-amino-acid chain; its full sequence is CKLF-like MARVEL transmembrane domain-containing protein 6 (183 aa).

Met1 bears the N-acetylmethionine mark. Residues 1 to 20 (MENGAVYSPTTEEDPGPARG) are disordered. Residues 1 to 39 (MENGAVYSPTTEEDPGPARGPRSGLAAYCFLGRLPLLRR) are Cytoplasmic-facing. Ser8 carries the phosphoserine modification. Residues 33–160 (RLPLLRRVLK…DFVTMLYEKR (128 aa)) form the MARVEL domain. A helical membrane pass occupies residues 40–60 (VLKGLQLSLSLLAFICEEVVS). Residues 61–67 (QCTLCGG) lie on the Extracellular side of the membrane. A helical membrane pass occupies residues 68–88 (LYFFEFVSCSAFLLSLLILIV). Residues 89-106 (YCTPFYERVDTTKVKSSD) lie on the Cytoplasmic side of the membrane. Residues 107–127 (FYITLGTGCVFLLASIIFVST) form a helical membrane-spanning segment. Residues 128–134 (HDRTSAE) lie on the Extracellular side of the membrane. A helical transmembrane segment spans residues 135–155 (IAAIVFGFIASFMFLLDFVTM). The Cytoplasmic portion of the chain corresponds to 156-183 (LYEKRQESQLRKSENTTRAEALTEPLNA). Thr171 carries the post-translational modification Phosphothreonine.

Belongs to the chemokine-like factor family. Interacts with PD-L1/CD274 (via transmembrane domain); the interaction is direct. Interacts with CMTM4. Interacts with CD58, ARG1, ENO1 and TMPO.

It localises to the cell membrane. The protein resides in the early endosome membrane. Its subcellular location is the recycling endosome membrane. In terms of biological role, master regulator of recycling and plasma membrane expression of PD-L1/CD274, an immune inhibitory ligand critical for immune tolerance to self and antitumor immunity. Associates with both constitutive and IFNG-induced PD-L1/CD274 at recycling endosomes, where it protects PD-L1/CD274 from being targeted for lysosomal degradation, likely by preventing its ubiquitination. May stabilize PD-L1/CD274 expression on antigen presenting cells and potentiates inhibitory signaling by PDCD1/CD279, its receptor on T-cells, ultimately triggering T-cell anergy. This is CKLF-like MARVEL transmembrane domain-containing protein 6 (CMTM6) from Pongo abelii (Sumatran orangutan).